The following is a 307-amino-acid chain: Porphobilinogen deaminase (307 aa).

Residue Cys241 is modified to S-(dipyrrolylmethanemethyl)cysteine.

It belongs to the HMBS family. As to quaternary structure, monomer. Requires dipyrromethane as cofactor.

It carries out the reaction 4 porphobilinogen + H2O = hydroxymethylbilane + 4 NH4(+). It functions in the pathway porphyrin-containing compound metabolism; protoporphyrin-IX biosynthesis; coproporphyrinogen-III from 5-aminolevulinate: step 2/4. In terms of biological role, tetrapolymerization of the monopyrrole PBG into the hydroxymethylbilane pre-uroporphyrinogen in several discrete steps. This chain is Porphobilinogen deaminase, found in Coxiella burnetii (strain CbuG_Q212) (Coxiella burnetii (strain Q212)).